The sequence spans 253 residues: MRQIIIAGNWKMNTTLSEACTLVQSMKCELERIEGIEKIICPPFISLYPIKTILENSSIKLGAQNLFYQEKGAYTGEISPLMLKELCQYVIIGHSERRAYFGETGQVVNQKIKAALQAGLLPIVCVGEKPEENENGQTRQVLETQLKEALDGLNLSCIIIAYEPIWAIGTGKAATASEANSAIGYIRRVLGDTLGNAAAQTSPILYGGSVNEKNITEILSQTNIDGALVGGASLKAESFVSICRQAAVIQNKH.

9 to 11 (NWK) provides a ligand contact to substrate. The active-site Electrophile is His94. Residue Glu163 is the Proton acceptor of the active site. Residues Gly169, Ser209, and 230–231 (GG) each bind substrate.

It belongs to the triosephosphate isomerase family. In terms of assembly, homodimer.

It localises to the cytoplasm. It carries out the reaction D-glyceraldehyde 3-phosphate = dihydroxyacetone phosphate. It functions in the pathway carbohydrate biosynthesis; gluconeogenesis. It participates in carbohydrate degradation; glycolysis; D-glyceraldehyde 3-phosphate from glycerone phosphate: step 1/1. Functionally, involved in the gluconeogenesis. Catalyzes stereospecifically the conversion of dihydroxyacetone phosphate (DHAP) to D-glyceraldehyde-3-phosphate (G3P). The polypeptide is Triosephosphate isomerase (Dehalococcoides mccartyi (strain CBDB1)).